The following is a 496-amino-acid chain: Glycerol kinase (496 aa).

Residue threonine 12 participates in ADP binding. ATP is bound by residues threonine 12, threonine 13, and serine 14. Sn-glycerol 3-phosphate is bound at residue threonine 12. Arginine 16 contacts ADP. The sn-glycerol 3-phosphate site is built by arginine 82, glutamate 83, and tyrosine 134. Glycerol-binding residues include arginine 82, glutamate 83, and tyrosine 134. Histidine 230 is modified (phosphohistidine; by HPr). Aspartate 244 is a sn-glycerol 3-phosphate binding site. 2 residues coordinate glycerol: aspartate 244 and glutamine 245. Positions 266 and 309 each coordinate ADP. ATP contacts are provided by threonine 266, glycine 309, glutamine 313, and glycine 410. ADP-binding residues include glycine 410 and asparagine 414.

Belongs to the FGGY kinase family. Homotetramer and homodimer (in equilibrium). The phosphoenolpyruvate-dependent sugar phosphotransferase system (PTS), including enzyme I, and histidine-containing protein (HPr) are required for the phosphorylation, which leads to the activation of the enzyme.

The catalysed reaction is glycerol + ATP = sn-glycerol 3-phosphate + ADP + H(+). The protein operates within polyol metabolism; glycerol degradation via glycerol kinase pathway; sn-glycerol 3-phosphate from glycerol: step 1/1. Activated by phosphorylation and inhibited by fructose 1,6-bisphosphate (FBP). Key enzyme in the regulation of glycerol uptake and metabolism. Catalyzes the phosphorylation of glycerol to yield sn-glycerol 3-phosphate. In Geobacillus kaustophilus (strain HTA426), this protein is Glycerol kinase.